A 952-amino-acid polypeptide reads, in one-letter code: Plasma membrane ATPase 4 (952 aa).

Topologically, residues 1-64 (MAKAISLEEI…EKNESKILKF (64 aa)) are cytoplasmic. A helical transmembrane segment spans residues 65–84 (LGFMWNPLSWVMEAAAVMAI). The Extracellular portion of the chain corresponds to 85–96 (ALANGDGKPPDW). Residues 97–117 (QDFIGIICLLVINSTISFIEE) form a helical membrane-spanning segment. The Cytoplasmic portion of the chain corresponds to 118–246 (NNAGNAAAAL…GHFQKVLTAI (129 aa)). A helical membrane pass occupies residues 247-267 (GNFCICSIAIGMLVEIIVMYP). Over 268–277 (IQHRKYRDGI) the chain is Extracellular. Residues 278-299 (DNLLVLLIGGIPIAMPTVLSVT) traverse the membrane as a helical segment. Residues 300 to 646 (MAIGSHRLSQ…TSRAIFQRMK (347 aa)) lie on the Cytoplasmic side of the membrane. The active-site 4-aspartylphosphate intermediate is the Asp-332. The Mg(2+) site is built by Asp-591 and Asp-595. The chain crosses the membrane as a helical span at residues 647 to 668 (NYTIYAVSITIRIVFGFMFIAL). Topologically, residues 669–673 (IWKYD) are extracellular. A helical membrane pass occupies residues 674 to 696 (FSAFMVLIIAILNDGTIMTISKD). At 697–712 (RVKPSPMPDSWKLKEI) the chain is on the cytoplasmic side. Residues 713 to 733 (FATGVVLGGYQALMTVVFFWA) traverse the membrane as a helical segment. The Extracellular segment spans residues 734-754 (MHDTDFFSDKFGVKSLRNSDE). The chain crosses the membrane as a helical span at residues 755–775 (EMMSALYLQVSIISQALIFVT). Residues 776 to 787 (RSRSWSFLERPG) lie on the Cytoplasmic side of the membrane. Residues 788–808 (MLLVIAFMIAQLVATLIAVYA) traverse the membrane as a helical segment. Over 809–817 (NWAFARVKG) the chain is Extracellular. A helical membrane pass occupies residues 818 to 838 (CGWGWAGVIWLYSIIFYLPLD). The Cytoplasmic segment spans residues 839 to 952 (IMKFAIRYIL…IETIQQHYTV (114 aa)).

This sequence belongs to the cation transport ATPase (P-type) (TC 3.A.3) family. Type IIIA subfamily. As to expression, expressed at high levels in root, stem, leaf and flower.

It localises to the cell membrane. The catalysed reaction is ATP + H2O + H(+)(in) = ADP + phosphate + 2 H(+)(out). Functionally, the plasma membrane ATPase of plants and fungi is a hydrogen ion pump. The proton gradient it generates drives the active transport of nutrients by H(+)-symport. The resulting external acidification and/or internal alkinization may mediate growth responses. The polypeptide is Plasma membrane ATPase 4 (PMA4) (Nicotiana plumbaginifolia (Leadwort-leaved tobacco)).